The sequence spans 129 residues: Small ribosomal subunit protein uS11 (129 aa).

This sequence belongs to the universal ribosomal protein uS11 family. In terms of assembly, part of the 30S ribosomal subunit. Interacts with proteins S7 and S18. Binds to IF-3.

In terms of biological role, located on the platform of the 30S subunit, it bridges several disparate RNA helices of the 16S rRNA. Forms part of the Shine-Dalgarno cleft in the 70S ribosome. The protein is Small ribosomal subunit protein uS11 of Levilactobacillus brevis (strain ATCC 367 / BCRC 12310 / CIP 105137 / JCM 1170 / LMG 11437 / NCIMB 947 / NCTC 947) (Lactobacillus brevis).